The sequence spans 51 residues: Large ribosomal subunit protein bL33 (51 aa).

Positions 1-21 (MRDKIKLESSAGTGHFYTTTK) are disordered. The segment covering 10-20 (SAGTGHFYTTT) has biased composition (polar residues).

The protein belongs to the bacterial ribosomal protein bL33 family.

This is Large ribosomal subunit protein bL33 (rpmG) from Neisseria meningitidis serogroup A / serotype 4A (strain DSM 15465 / Z2491).